We begin with the raw amino-acid sequence, 569 residues long: Pyrophosphate--fructose 6-phosphate 1-phosphotransferase subunit beta 2 (569 aa).

Gly107 provides a ligand contact to diphosphate. Asp201 is a binding site for Mg(2+). Substrate is bound by residues 229–231 (TID), 268–269 (KY), 276–278 (MGR), Glu337, and 442–445 (YEGR). Residue Asp231 is the Proton acceptor of the active site.

This sequence belongs to the phosphofructokinase type A (PFKA) family. PPi-dependent PFK group II subfamily. Clade 'Long' sub-subfamily. In terms of assembly, tetramer of two alpha (regulatory) and two beta (catalytic) chains. The cofactor is Mg(2+).

It is found in the cytoplasm. The enzyme catalyses beta-D-fructose 6-phosphate + diphosphate = beta-D-fructose 1,6-bisphosphate + phosphate + H(+). It functions in the pathway carbohydrate degradation; glycolysis; D-glyceraldehyde 3-phosphate and glycerone phosphate from D-glucose: step 3/4. Allosterically activated by fructose 2,6-bisphosphate. Its function is as follows. Catalytic subunit of pyrophosphate--fructose 6-phosphate 1-phosphotransferase. Catalyzes the phosphorylation of D-fructose 6-phosphate, the first committing step of glycolysis. Uses inorganic phosphate (PPi) as phosphoryl donor instead of ATP like common ATP-dependent phosphofructokinases (ATP-PFKs), which renders the reaction reversible, and can thus function both in glycolysis and gluconeogenesis. In Arabidopsis thaliana (Mouse-ear cress), this protein is Pyrophosphate--fructose 6-phosphate 1-phosphotransferase subunit beta 2.